The chain runs to 459 residues: Peptidyl-prolyl cis-trans isomerase FKBP4 (459 aa).

Methionine 1 bears the N-acetylmethionine; in peptidyl-prolyl cis-trans isomerase FKBP4; alternate mark. The tract at residues 1–22 (MTAEETKAAESGAQSAPLRLEG) is disordered. Threonine 2 bears the N-acetylthreonine; in peptidyl-prolyl cis-trans isomerase FKBP4, N-terminally processed; partial mark. In terms of domain architecture, PPIase FKBP-type 1 spans 50-138 (GDRVFVHYTG…VFEVELFEFK (89 aa)). Phosphothreonine is present on threonine 143. The PPIase FKBP-type 2 domain maps to 167–253 (GALVEVALEG…KYEIHLKSFE (87 aa)). Tyrosine 220 carries the post-translational modification Phosphotyrosine. An interaction with tubulin region spans residues 267–400 (LEQSTIVKER…AQLVVCQQRI (134 aa)). TPR repeat units lie at residues 270 to 303 (STIV…LEYE), 319 to 352 (LASH…DSNN), and 354 to 386 (KGLF…YPSN). Lysine 282 is modified (N6-acetyllysine). Residue arginine 373 is modified to Omega-N-methylarginine. The interval 423 to 459 (TKAKATVAAGDQPADAEMRDEPKNDVAGGQPQVEAEA) is disordered.

In terms of assembly, homodimer. Interacts with GLMN. Associates with HSP90AA1 and HSP70 in steroid hormone receptor complexes. Also interacts with peroxisomal phytanoyl-CoA alpha-hydroxylase (PHYH). Interacts with NR3C1 and dynein. Interacts with HSF1 in the HSP90 complex. Associates with tubulin. Interacts with MAPT/TAU. Interacts (via TPR domain) with S100A1, S100A2 and S100A6; the interaction is Ca(2+) dependent. Interaction with S100A1 and S100A2 (but not with S100A6) leads to inhibition of FKBP4-HSP90 interaction. Interacts with dynein; causes partially NR3C1 transport to the nucleus.

It localises to the cytoplasm. The protein resides in the cytosol. The protein localises to the mitochondrion. Its subcellular location is the nucleus. It is found in the cytoskeleton. It carries out the reaction [protein]-peptidylproline (omega=180) = [protein]-peptidylproline (omega=0). With respect to regulation, inhibited by FK506. Its function is as follows. Immunophilin protein with PPIase and co-chaperone activities. Component of unligated steroid receptors heterocomplexes through interaction with heat-shock protein 90 (HSP90). May play a role in the intracellular trafficking of heterooligomeric forms of steroid hormone receptors between cytoplasm and nuclear compartments. The isomerase activity controls neuronal growth cones via regulation of TRPC1 channel opening. Also acts as a regulator of microtubule dynamics by inhibiting MAPT/TAU ability to promote microtubule assembly. May have a protective role against oxidative stress in mitochondria. The chain is Peptidyl-prolyl cis-trans isomerase FKBP4 (FKBP4) from Bos taurus (Bovine).